Here is a 459-residue protein sequence, read N- to C-terminus: Cysteine--tRNA ligase (459 aa).

C29 contacts Zn(2+). A 'HIGH' region motif is present at residues 31-41 (PTVYNLVHIGN). C209, H234, and E238 together coordinate Zn(2+). A 'KMSKS' region motif is present at residues 267–271 (KMSKS). K270 is an ATP binding site.

This sequence belongs to the class-I aminoacyl-tRNA synthetase family. In terms of assembly, monomer. Requires Zn(2+) as cofactor.

The protein resides in the cytoplasm. The enzyme catalyses tRNA(Cys) + L-cysteine + ATP = L-cysteinyl-tRNA(Cys) + AMP + diphosphate. The polypeptide is Cysteine--tRNA ligase (Saccharophagus degradans (strain 2-40 / ATCC 43961 / DSM 17024)).